The primary structure comprises 241 residues: Octanoyltransferase (241 aa).

One can recognise a BPL/LPL catalytic domain in the interval 50 to 238; that stretch reads KIAHEQVWLL…AFEQIFGPTI (189 aa). Residues 89–96, 169–171, and 182–184 contribute to the substrate site; these read RGGEFTYH, AIG, and GIS. Cys200 functions as the Acyl-thioester intermediate in the catalytic mechanism.

It belongs to the LipB family.

It localises to the cytoplasm. It carries out the reaction octanoyl-[ACP] + L-lysyl-[protein] = N(6)-octanoyl-L-lysyl-[protein] + holo-[ACP] + H(+). Its pathway is protein modification; protein lipoylation via endogenous pathway; protein N(6)-(lipoyl)lysine from octanoyl-[acyl-carrier-protein]: step 1/2. Functionally, catalyzes the transfer of endogenously produced octanoic acid from octanoyl-acyl-carrier-protein onto the lipoyl domains of lipoate-dependent enzymes. Lipoyl-ACP can also act as a substrate although octanoyl-ACP is likely to be the physiological substrate. In Bartonella bacilliformis (strain ATCC 35685 / KC583 / Herrer 020/F12,63), this protein is Octanoyltransferase.